An 86-amino-acid chain; its full sequence is uncharacterized protein (86 aa).

This sequence to M.jannaschii MJ1173.

This is an uncharacterized protein from Methanosarcina mazei (strain ATCC BAA-159 / DSM 3647 / Goe1 / Go1 / JCM 11833 / OCM 88) (Methanosarcina frisia).